The chain runs to 340 residues: Meiotic recombination protein DMC1/LIM15 homolog (340 aa).

ATP is bound at residue 126–133; that stretch reads GEFRTGKT. Arginine 230 lines the dsDNA pocket. The ssDNA site is built by arginine 230, phenylalanine 233, arginine 236, arginine 242, and arginine 311. The dsDNA site is built by arginine 236 and arginine 242.

Belongs to the RecA family. DMC1 subfamily. In terms of assembly, double stacked ring-shaped homooctamer. Interacts with BRCA2. Interacts with the MND1-PSMC3IP heterodimer. Interacts with RAD51AP1; the interaction is direct and stimulates DMC1-mediated homologous recombination. Testis.

It localises to the nucleus. The protein resides in the chromosome. Functionally, participates in meiotic recombination, specifically in homologous strand assimilation, which is required for the resolution of meiotic double-strand breaks. This chain is Meiotic recombination protein DMC1/LIM15 homolog, found in Mus musculus (Mouse).